A 166-amino-acid chain; its full sequence is MIDSEGFRPNVGIILANDNGQVLWAKRIGHNAWQFPQGGIHFGETPEQALYRELREEVGLLPEHVQIIAQTKGWLRYRLPHRYIRPDSDPVCIGQKQKWFLLKLTASTRHIQLNLSDPPEFDEWQWVSYWYPLGQVVNFKRDVYRKAMMELCMLLPQQQTFEKSSL.

The region spanning 6-149 (GFRPNVGIIL…KRDVYRKAMM (144 aa)) is the Nudix hydrolase domain. The short motif at 38–59 (GGIHFGETPEQALYRELREEVG) is the Nudix box element.

This sequence belongs to the Nudix hydrolase family. RppH subfamily. It depends on a divalent metal cation as a cofactor.

Accelerates the degradation of transcripts by removing pyrophosphate from the 5'-end of triphosphorylated RNA, leading to a more labile monophosphorylated state that can stimulate subsequent ribonuclease cleavage. The polypeptide is RNA pyrophosphohydrolase (Acinetobacter baylyi (strain ATCC 33305 / BD413 / ADP1)).